A 142-amino-acid chain; its full sequence is Hemoglobin subunit pi (142 aa).

Residues 2-142 (TLTQAEKAAV…VSSVLTEKYR (141 aa)) enclose the Globin domain. Heme b contacts are provided by H59 and H88.

The protein belongs to the globin family.

In terms of biological role, the pi' chain is the counterpart of the alpha chain in the major early embryonic hemoglobin P. This chain is Hemoglobin subunit pi, found in Cairina moschata (Muscovy duck).